The sequence spans 187 residues: Adenylate kinase (187 aa).

10 to 15 is a binding site for ATP; the sequence is GSGKGT. The segment at 30–59 is NMP; it reads STGDLLRSEVVAGTPLGLQAKQVMAQGDLV. Residues threonine 31, arginine 36, 57–59, 85–88, and glutamine 92 each bind AMP; these read DLV and GYPR. The tract at residues 126-136 is LID; sequence GRAQAEGREDD. ATP is bound at residue arginine 127. Residues arginine 133 and arginine 144 each contribute to the AMP site. Glycine 172 serves as a coordination point for ATP.

The protein belongs to the adenylate kinase family. As to quaternary structure, monomer.

The protein localises to the cytoplasm. The catalysed reaction is AMP + ATP = 2 ADP. The protein operates within purine metabolism; AMP biosynthesis via salvage pathway; AMP from ADP: step 1/1. Catalyzes the reversible transfer of the terminal phosphate group between ATP and AMP. Plays an important role in cellular energy homeostasis and in adenine nucleotide metabolism. The chain is Adenylate kinase from Xylella fastidiosa (strain M12).